We begin with the raw amino-acid sequence, 396 residues long: 1-deoxy-D-xylulose 5-phosphate reductoisomerase (396 aa).

Residues threonine 15, glycine 16, serine 17, isoleucine 18, glycine 41, and asparagine 130 each contribute to the NADPH site. Lysine 131 contacts 1-deoxy-D-xylulose 5-phosphate. Position 132 (glutamate 132) interacts with NADPH. Aspartate 155 contacts Mn(2+). Residues serine 156, glutamate 157, serine 181, and histidine 204 each coordinate 1-deoxy-D-xylulose 5-phosphate. Glutamate 157 contacts Mn(2+). Glycine 210 lines the NADPH pocket. Positions 217, 222, 223, and 226 each coordinate 1-deoxy-D-xylulose 5-phosphate. Glutamate 226 contributes to the Mn(2+) binding site.

Belongs to the DXR family. It depends on Mg(2+) as a cofactor. Mn(2+) serves as cofactor.

It catalyses the reaction 2-C-methyl-D-erythritol 4-phosphate + NADP(+) = 1-deoxy-D-xylulose 5-phosphate + NADPH + H(+). Its pathway is isoprenoid biosynthesis; isopentenyl diphosphate biosynthesis via DXP pathway; isopentenyl diphosphate from 1-deoxy-D-xylulose 5-phosphate: step 1/6. Its function is as follows. Catalyzes the NADPH-dependent rearrangement and reduction of 1-deoxy-D-xylulose-5-phosphate (DXP) to 2-C-methyl-D-erythritol 4-phosphate (MEP). The polypeptide is 1-deoxy-D-xylulose 5-phosphate reductoisomerase (Bifidobacterium longum (strain NCC 2705)).